A 207-amino-acid polypeptide reads, in one-letter code: MLAVHRPSSAVSDGDSVQIPMMIASFQKRFPSLSRDSTAARFHTHEVGPNQCCSAVIQEISAPISTVWSVVRRFDNPQAYKHFLKSCSVIGGDGDNVGSLRQVHVVSGLPAASSTERLDILDDERHVISFSVVGGDHRLSNYRSVTTLHPSPISGTVVVESYVVDVPPGNTKEETCDFVDVIVRCNLQSLAKIAENTAAESKKKMSL.

The tract at residues 45–195 (HEVGPNQCCS…NLQSLAKIAE (151 aa)) is START-like. Residues Cys-52 and Cys-176 are joined by a disulfide bond. Abscisate is bound by residues Lys-81, 111–116 (AASSTE), 138–144 (RLSNYRS), and Glu-160. A Gate loop motif is present at residues 107-111 (SGLPA). The Latch loop motif lies at 137–139 (HRL).

Belongs to the PYR/PYL/RCAR abscisic acid intracellular receptor family. Monomer. Homodimer. Binds ABA on one subunit only. Interacts with HAB1, ABI1 and ABI2, and possibly with other PP2Cs. Binds to CARs protein in an ABA-independent manner, both at the plasma membrane and in the nucleus. Interacts directly with CAR1 and CAR4. Interacts with TOPP1. Interacts with DDA1. Interacts with FREE1 (via N-terminus). Interacts with the E3 ubiquitin-protein ligase RSL1 at the plasma membrane. Post-translationally, ubiquitynated and degraded by the proteasome upon binding to the E3 ubiquitin-protein ligase RSL1 at the plasma membrane.

The protein localises to the cytoplasm. It localises to the nucleus. Its subcellular location is the cell membrane. The protein resides in the vacuole. Its function is as follows. Receptor for abscisic acid (ABA) required for ABA-mediated responses such as stomatal closure and germination inhibition. Inhibits the activity of group-A protein phosphatases type 2C (PP2Cs) when activated by ABA. Can be activated by both (-)-ABA and (+)-ABA. This is Abscisic acid receptor PYL4 from Arabidopsis thaliana (Mouse-ear cress).